The chain runs to 329 residues: o-succinylbenzoate synthase (329 aa).

K140 (proton donor) is an active-site residue. Positions 168, 197, and 220 each coordinate Mg(2+). K242 functions as the Proton acceptor in the catalytic mechanism.

The protein belongs to the mandelate racemase/muconate lactonizing enzyme family. MenC type 1 subfamily. Requires a divalent metal cation as cofactor.

The enzyme catalyses (1R,6R)-6-hydroxy-2-succinyl-cyclohexa-2,4-diene-1-carboxylate = 2-succinylbenzoate + H2O. It participates in quinol/quinone metabolism; 1,4-dihydroxy-2-naphthoate biosynthesis; 1,4-dihydroxy-2-naphthoate from chorismate: step 4/7. It functions in the pathway quinol/quinone metabolism; menaquinone biosynthesis. Its function is as follows. Converts 2-succinyl-6-hydroxy-2,4-cyclohexadiene-1-carboxylate (SHCHC) to 2-succinylbenzoate (OSB). The chain is o-succinylbenzoate synthase from Haemophilus influenzae (strain ATCC 51907 / DSM 11121 / KW20 / Rd).